We begin with the raw amino-acid sequence, 99 residues long: Large ribosomal subunit protein uL23c (99 aa).

It belongs to the universal ribosomal protein uL23 family. As to quaternary structure, part of the 50S ribosomal subunit.

Its subcellular location is the plastid. The protein resides in the chloroplast. In terms of biological role, binds to 23S rRNA. This chain is Large ribosomal subunit protein uL23c (rpl23), found in Emiliania huxleyi (Coccolithophore).